The following is a 220-amino-acid chain: Probable N-acetyl-alpha-D-glucosaminyl L-malate deacetylase 2 (220 aa).

His-11, Asp-14, and His-125 together coordinate Zn(2+).

Belongs to the PIGL family. The cofactor is Zn(2+).

The catalysed reaction is (S)-malyl N-acetyl-alpha-D-glucosaminide + H2O = (S)-malyl alpha-D-glucosaminide + acetate. In terms of biological role, involved in bacillithiol (BSH) biosynthesis. Catalyzes the second step of the pathway, the deacetylation of N-acetylglucosaminylmalate (GlcNAc-Mal) to glucosamine malate (GlcN-Mal). Has weak activity compared with bshB1. The sequence is that of Probable N-acetyl-alpha-D-glucosaminyl L-malate deacetylase 2 from Bacillus cereus (strain ATCC 14579 / DSM 31 / CCUG 7414 / JCM 2152 / NBRC 15305 / NCIMB 9373 / NCTC 2599 / NRRL B-3711).